The sequence spans 416 residues: Gamma-glutamyl phosphate reductase (416 aa).

This sequence belongs to the gamma-glutamyl phosphate reductase family.

The protein localises to the cytoplasm. The enzyme catalyses L-glutamate 5-semialdehyde + phosphate + NADP(+) = L-glutamyl 5-phosphate + NADPH + H(+). It functions in the pathway amino-acid biosynthesis; L-proline biosynthesis; L-glutamate 5-semialdehyde from L-glutamate: step 2/2. Its function is as follows. Catalyzes the NADPH-dependent reduction of L-glutamate 5-phosphate into L-glutamate 5-semialdehyde and phosphate. The product spontaneously undergoes cyclization to form 1-pyrroline-5-carboxylate. This is Gamma-glutamyl phosphate reductase from Streptococcus pyogenes serotype M49 (strain NZ131).